The primary structure comprises 429 residues: G2/mitotic-specific cyclin-B1 (429 aa).

Residues 71 to 114 (TGKVSAKIPPPKPLEKVPPVSEPEVELAETHEPEPVMDEKLSPE) are disordered. Position 73 is an N6-acetyllysine (K73). Basic and acidic residues predominate over residues 98–112 (AETHEPEPVMDEKLS). The residue at position 122 (S122) is a Phosphoserine; by CDK1. S124 is modified (phosphoserine). At S129 the chain carries Phosphoserine; by PLK1. S143 is modified (phosphoserine). Interaction with CDK2 regions lie at residues 165–173 (EYVKDIYAY) and 254–257 (YEEM). T317 bears the Phosphothreonine mark.

It belongs to the cyclin family. Cyclin AB subfamily. As to quaternary structure, interacts with the CDC2 protein kinase to form a serine/threonine kinase holoenzyme complex also known as maturation promoting factor (MPF). The cyclin subunit imparts substrate specificity to the complex. Binds HEI10. Interacts with catalytically active RALBP1 and CDC2 during mitosis to form an endocytotic complex during interphase. Interacts with CCNF; interaction is required for nuclear localization. Interacts with CDK5RAP3. Interacts with RFPL4A and UBE2A. Interacts with INCA1. Post-translationally, ubiquitinated by the SCF(NIPA) complex during interphase, leading to its destruction. Not ubiquitinated during G2/M phases. Phosphorylated by PLK1 at Ser-129 on centrosomes during prophase: phosphorylation by PLK1 does not cause nuclear import. Phosphorylation at Ser-143 was also reported to be mediated by PLK1 but Ser-129 seems to be the primary phosphorylation site.

The protein resides in the cytoplasm. Its subcellular location is the nucleus. The protein localises to the cytoskeleton. It is found in the microtubule organizing center. It localises to the centrosome. Functionally, essential for the control of the cell cycle at the G2/M (mitosis) transition. The polypeptide is G2/mitotic-specific cyclin-B1 (CCNB1) (Mesocricetus auratus (Golden hamster)).